We begin with the raw amino-acid sequence, 198 residues long: Protein GrpE (198 aa).

Belongs to the GrpE family. Homodimer.

Its subcellular location is the cytoplasm. Its function is as follows. Participates actively in the response to hyperosmotic and heat shock by preventing the aggregation of stress-denatured proteins, in association with DnaK and GrpE. It is the nucleotide exchange factor for DnaK and may function as a thermosensor. Unfolded proteins bind initially to DnaJ; upon interaction with the DnaJ-bound protein, DnaK hydrolyzes its bound ATP, resulting in the formation of a stable complex. GrpE releases ADP from DnaK; ATP binding to DnaK triggers the release of the substrate protein, thus completing the reaction cycle. Several rounds of ATP-dependent interactions between DnaJ, DnaK and GrpE are required for fully efficient folding. In Actinobacillus pleuropneumoniae serotype 3 (strain JL03), this protein is Protein GrpE.